We begin with the raw amino-acid sequence, 241 residues long: Gamma-interferon-inducible lysosomal thiol reductase-like protein (241 aa).

Positions 1–18 are cleaved as a signal peptide; sequence MLFKSLLLLSVYAVTCYG. N-linked (GlcNAc...) asparagine glycans are attached at residues asparagine 105 and asparagine 152. A helical transmembrane segment spans residues 218-235; sequence STGSAISSLGMIVTVVAV.

This sequence belongs to the GILT family. As to expression, salivary gland (at protein level). Low-level expression in midgut (at protein level). Expressed in head and leg tissues. Ovary. Fat body. In terms of tissue distribution, (Microbial infection) Detected with Plasmodium berghei sporozoites isolated from the saliva of infected Anopheles gambiae mosquitoes (at protein level).

The protein localises to the membrane. Required for normal development of ovary and testis. Functionally, (Microbial infection) Interacts with the surface of Plasmodium berghei sporozoites. Reduces P.berghei sporozoite cell traversal activity and transmission. Limits the motility of P.berghei sporozoites. Decreases the levels of host liver infection by P.berghei sporozoites. Does not affect P.berghei sporozoite viability. Indirectly promotes P.berghei survival in mosquitoes by influencing ovarian development and the subsequent production of 20-hydroxyecdysone and vitellogenin, which, in turn, modulates TEP1-dependent parasite killing. Promotes P.berghei infection in mosquitoes, most likely impacting the oocyst stage of parasite development. Its function is as follows. (Microbial infection) Promotes Plasmodium falciparum survival in mosquitoes. This Anopheles gambiae (African malaria mosquito) protein is Gamma-interferon-inducible lysosomal thiol reductase-like protein.